The chain runs to 109 residues: Aquaporin-2 (109 aa).

At 1–6 (SVAFSR) the chain is on the cytoplasmic side. Residues 7-27 (AVLAEFLATLIFVFFGLGSAL) form a helical membrane-spanning segment. The Extracellular segment spans residues 28–35 (SWPQALPS). A helical transmembrane segment spans residues 36-54 (VLQIALAFGLAIGTLVQAL). Residues 55–59 (GHVSG) lie on the Cytoplasmic side of the membrane. Positions 60 to 69 (AHINPAVTVA) form an intramembrane region, discontinuously helical. The short motif at 63-65 (NPA) is the NPA 1 element. Residues 70-80 (CLVGCHVSFLR) are Cytoplasmic-facing. A helical membrane pass occupies residues 81–102 (AAFYVAAQLLGAVAGAAILHEI). The Extracellular segment spans residues 103-109 (TPPDVRG).

Belongs to the MIP/aquaporin (TC 1.A.8) family. As to quaternary structure, homotetramer. Post-translationally, serine phosphorylation is necessary and sufficient for expression at the apical membrane. Endocytosis is not phosphorylation-dependent. In terms of processing, N-glycosylated.

Its subcellular location is the apical cell membrane. The protein resides in the basolateral cell membrane. It localises to the cell membrane. The protein localises to the cytoplasmic vesicle membrane. It is found in the golgi apparatus. Its subcellular location is the trans-Golgi network membrane. It catalyses the reaction H2O(in) = H2O(out). The enzyme catalyses glycerol(in) = glycerol(out). Functionally, forms a water-specific channel that provides the plasma membranes of renal collecting duct with high permeability to water, thereby permitting water to move in the direction of an osmotic gradient. Plays an essential role in renal water homeostasis. Could also be permeable to glycerol. This chain is Aquaporin-2, found in Dasypus novemcinctus (Nine-banded armadillo).